The primary structure comprises 138 residues: Transcription antitermination protein NusB (138 aa).

The protein belongs to the NusB family.

Functionally, involved in transcription antitermination. Required for transcription of ribosomal RNA (rRNA) genes. Binds specifically to the boxA antiterminator sequence of the ribosomal RNA (rrn) operons. This chain is Transcription antitermination protein NusB, found in Alkaliphilus oremlandii (strain OhILAs) (Clostridium oremlandii (strain OhILAs)).